A 412-amino-acid polypeptide reads, in one-letter code: Mitochondrial distribution and morphology protein 12 (412 aa).

Residues Met-1 to Gly-410 enclose the SMP-LTD domain. Disordered stretches follow at residues Glu-66 to Glu-96, Tyr-108 to Asp-136, Gln-166 to Asn-238, and Pro-314 to Pro-354. A compositionally biased stretch (low complexity) spans Asn-220–Asn-238.

This sequence belongs to the MDM12 family. Component of the ER-mitochondria encounter structure (ERMES) or MDM complex, composed of MMM1, MDM10, MDM12 and MDM34. An MMM1 homodimer associates with one molecule of MDM12 on each side in a pairwise head-to-tail manner, and the SMP-LTD domains of MMM1 and MDM12 generate a continuous hydrophobic tunnel for phospholipid trafficking.

Its subcellular location is the mitochondrion outer membrane. The protein resides in the endoplasmic reticulum membrane. Functionally, component of the ERMES/MDM complex, which serves as a molecular tether to connect the endoplasmic reticulum (ER) and mitochondria. Components of this complex are involved in the control of mitochondrial shape and protein biogenesis, and function in nonvesicular lipid trafficking between the ER and mitochondria. MDM12 is required for the interaction of the ER-resident membrane protein MMM1 and the outer mitochondrial membrane-resident beta-barrel protein MDM10. The MDM12-MMM1 subcomplex functions in the major beta-barrel assembly pathway that is responsible for biogenesis of all mitochondrial outer membrane beta-barrel proteins, and acts in a late step after the SAM complex. The MDM10-MDM12-MMM1 subcomplex further acts in the TOM40-specific pathway after the action of the MDM12-MMM1 complex. Essential for establishing and maintaining the structure of mitochondria and maintenance of mtDNA nucleoids. This chain is Mitochondrial distribution and morphology protein 12, found in Coprinopsis cinerea (strain Okayama-7 / 130 / ATCC MYA-4618 / FGSC 9003) (Inky cap fungus).